Consider the following 365-residue polypeptide: tRNA(Met) cytidine acetate ligase (365 aa).

ATP contacts are provided by residues 7-20 (IAEF…HKYL), glycine 96, asparagine 152, and arginine 175.

Belongs to the TmcAL family.

The protein localises to the cytoplasm. It catalyses the reaction cytidine(34) in elongator tRNA(Met) + acetate + ATP = N(4)-acetylcytidine(34) in elongator tRNA(Met) + AMP + diphosphate. Catalyzes the formation of N(4)-acetylcytidine (ac(4)C) at the wobble position of elongator tRNA(Met), using acetate and ATP as substrates. First activates an acetate ion to form acetyladenylate (Ac-AMP) and then transfers the acetyl group to tRNA to form ac(4)C34. In Streptococcus pneumoniae serotype 19F (strain G54), this protein is tRNA(Met) cytidine acetate ligase.